The chain runs to 98 residues: NADH-ubiquinone oxidoreductase chain 4L (98 aa).

3 consecutive transmembrane segments (helical) span residues 1–21 (MTLI…GLLM), 29–49 (ALLC…LTIL), and 61–81 (IILL…LVMV).

This sequence belongs to the complex I subunit 4L family. As to quaternary structure, core subunit of respiratory chain NADH dehydrogenase (Complex I) which is composed of 45 different subunits.

The protein localises to the mitochondrion inner membrane. The catalysed reaction is a ubiquinone + NADH + 5 H(+)(in) = a ubiquinol + NAD(+) + 4 H(+)(out). Functionally, core subunit of the mitochondrial membrane respiratory chain NADH dehydrogenase (Complex I) which catalyzes electron transfer from NADH through the respiratory chain, using ubiquinone as an electron acceptor. Part of the enzyme membrane arm which is embedded in the lipid bilayer and involved in proton translocation. This chain is NADH-ubiquinone oxidoreductase chain 4L (MT-ND4L), found in Megaptera novaeangliae (Humpback whale).